The primary structure comprises 273 residues: MRHTLPIAPQFYVTAPQPCPYLAGRMERKLFTALQGEGAERLNNALSQQGFRRSQNVLYRPSCADCAACLSARIDVSAFRASRSQKRAMRRNAHLTRRATSPWATDEQYELFRRYLDSRHADGGMADMDVFEFAAMIEETPIRSRVIEYAHRDTRALIGVSLTDVLDDGLSMVYSFYDPDLHRDSLGTHMILDHIAIAREAGLPYVYLGYWVPGSPKMGYKSRFSGLEIYLGGRWQAMTDPEAHDAIRHPLSTDPIAEQVANIQLPDRWPTGD.

Belongs to the R-transferase family. Bpt subfamily.

Its subcellular location is the cytoplasm. It carries out the reaction N-terminal L-glutamyl-[protein] + L-leucyl-tRNA(Leu) = N-terminal L-leucyl-L-glutamyl-[protein] + tRNA(Leu) + H(+). It catalyses the reaction N-terminal L-aspartyl-[protein] + L-leucyl-tRNA(Leu) = N-terminal L-leucyl-L-aspartyl-[protein] + tRNA(Leu) + H(+). In terms of biological role, functions in the N-end rule pathway of protein degradation where it conjugates Leu from its aminoacyl-tRNA to the N-termini of proteins containing an N-terminal aspartate or glutamate. This Ruegeria pomeroyi (strain ATCC 700808 / DSM 15171 / DSS-3) (Silicibacter pomeroyi) protein is Aspartate/glutamate leucyltransferase.